The following is a 185-amino-acid chain: Segregation and condensation protein B (185 aa).

Belongs to the ScpB family. As to quaternary structure, homodimer. Homodimerization may be required to stabilize the binding of ScpA to the Smc head domains. Component of a cohesin-like complex composed of ScpA, ScpB and the Smc homodimer, in which ScpA and ScpB bind to the head domain of Smc. The presence of the three proteins is required for the association of the complex with DNA.

Its subcellular location is the cytoplasm. Participates in chromosomal partition during cell division. May act via the formation of a condensin-like complex containing Smc and ScpA that pull DNA away from mid-cell into both cell halves. This is Segregation and condensation protein B from Alkaliphilus oremlandii (strain OhILAs) (Clostridium oremlandii (strain OhILAs)).